The chain runs to 87 residues: Cx9C motif-containing protein 4, mitochondrial (87 aa).

A CHCH domain is found at 9–51 (ENACKPFACAIQDCLIENGYNESKCTKAIDNLYKCCKQFYEEN). 2 consecutive short sequence motifs (cx9C motif) follow at residues 12-22 (CKPFACAIQDC) and 33-43 (CTKAIDNLYKC). 2 disulfide bridges follow: cysteine 12–cysteine 43 and cysteine 22–cysteine 33.

Belongs to the CMC4 family.

It localises to the mitochondrion intermembrane space. This chain is Cx9C motif-containing protein 4, mitochondrial (CMC4), found in Clavispora lusitaniae (strain ATCC 42720) (Yeast).